Here is a 64-residue protein sequence, read N- to C-terminus: Large ribosomal subunit protein bL33 (64 aa).

It belongs to the bacterial ribosomal protein bL33 family.

The chain is Large ribosomal subunit protein bL33 from Thermosynechococcus vestitus (strain NIES-2133 / IAM M-273 / BP-1).